We begin with the raw amino-acid sequence, 153 residues long: Inner membrane protein YjiG (153 aa).

Topologically, residues 1 to 31 (MTTQVRKNVMDMFIDGARRGFTIATTNLLPN) are periplasmic. Residues 32-52 (VVMAFVIIQALKITGLLDWVG) form a helical membrane-spanning segment. Topologically, residues 53 to 68 (HICEPVMALWGLPGEA) are cytoplasmic. 2 consecutive transmembrane segments (helical) span residues 69–89 (ATVL…AASL) and 90–110 (ATAG…MYLM). Residues 111 to 132 (GNPVQNVGRCLGTAEVNAKYYP) lie on the Cytoplasmic side of the membrane. The chain crosses the membrane as a helical span at residues 133–153 (HIITVCVINALLSIWVMQLIV).

Belongs to the SpmB family.

The protein localises to the cell inner membrane. This is Inner membrane protein YjiG (yjiG) from Escherichia coli O157:H7.